The chain runs to 281 residues: Src-like-adapter (281 aa).

The disordered stretch occupies residues 1-20 (MGNSMKSTSPPSERPLSSSE). Residue Gly-2 is the site of N-myristoyl glycine attachment. The segment covering 7-20 (STSPPSERPLSSSE) has biased composition (low complexity). The region spanning 22 to 82 (LESDFLAVLT…PGICVARVYH (61 aa)) is the SH3 domain. In terms of domain architecture, SH2 spans 84–175 (WLFEGLGRDK…GLCCVLTTPC (92 aa)). The interval 190 to 281 (CTSPGSPVTL…FFSAPQYFED (92 aa)) is SLA C-terminal. Ser-258 is modified (phosphoserine). Phosphotyrosine is present on Tyr-278.

Homodimer. Interacts with phosphorylated CBL, SYK and LAT. Homodimerization and interaction with phosphorylated CBL occurs via its C-terminal domain. Interacts with PDGFRB and EPHA2. Interacts with phosphorylated proteins ZAP70; CD3Z; VAV1 and LCP2 via its SH2 domain. Predominantly expressed in lymphoid tissues. Highly expressed in spleen, thymus and lymph nodes. Weakly expressed in lung and brain. Expressed in T-cells and at low level in B-cells.

It localises to the cytoplasm. The protein resides in the endosome. In terms of biological role, adapter protein, which negatively regulates T-cell receptor (TCR) signaling. Inhibits T-cell antigen-receptor induced activation of nuclear factor of activated T-cells. Involved in the negative regulation of positive selection and mitosis of T-cells. May act by linking signaling proteins such as ZAP70 with CBL, leading to a CBL dependent degradation of signaling proteins. The chain is Src-like-adapter (Sla) from Mus musculus (Mouse).